We begin with the raw amino-acid sequence, 267 residues long: Cilia- and flagella-associated protein 300 (267 aa).

It belongs to the CFAP300 family. As to quaternary structure, interacts with DNAAF2. As to expression, expressed in the left-right organiser (LRO) node at 8.25 dpc.

It is found in the cytoplasm. It localises to the cytoskeleton. Its subcellular location is the cilium axoneme. Its function is as follows. Cilium- and flagellum-specific protein that plays a role in axonemal structure organization and motility. May play a role in outer and inner dynein arm assembly. This is Cilia- and flagella-associated protein 300 from Mus musculus (Mouse).